We begin with the raw amino-acid sequence, 715 residues long: Polyribonucleotide nucleotidyltransferase (715 aa).

Residues aspartate 493 and aspartate 499 each coordinate Mg(2+). Positions proline 560–isoleucine 619 constitute a KH domain. The 69-residue stretch at glycine 629–lysine 697 folds into the S1 motif domain.

It belongs to the polyribonucleotide nucleotidyltransferase family. It depends on Mg(2+) as a cofactor.

It is found in the cytoplasm. It catalyses the reaction RNA(n+1) + phosphate = RNA(n) + a ribonucleoside 5'-diphosphate. Its function is as follows. Involved in mRNA degradation. Catalyzes the phosphorolysis of single-stranded polyribonucleotides processively in the 3'- to 5'-direction. This chain is Polyribonucleotide nucleotidyltransferase, found in Burkholderia vietnamiensis (strain G4 / LMG 22486) (Burkholderia cepacia (strain R1808)).